The sequence spans 358 residues: Protein RecA (358 aa).

Glycine 66–threonine 73 contacts ATP.

Belongs to the RecA family.

Its subcellular location is the cytoplasm. Can catalyze the hydrolysis of ATP in the presence of single-stranded DNA, the ATP-dependent uptake of single-stranded DNA by duplex DNA, and the ATP-dependent hybridization of homologous single-stranded DNAs. It interacts with LexA causing its activation and leading to its autocatalytic cleavage. This is Protein RecA from Herpetosiphon aurantiacus (strain ATCC 23779 / DSM 785 / 114-95).